Reading from the N-terminus, the 317-residue chain is L-lactate dehydrogenase (317 aa).

NAD(+)-binding positions include Val-17, Asp-38, Lys-43, Tyr-68, and 82–83 (GV). Arg-91 serves as a coordination point for substrate. NAD(+) contacts are provided by residues Ser-104, 121–123 (VSN), and Ser-146. 123-126 (NPVD) provides a ligand contact to substrate. 151 to 154 (DTSR) provides a ligand contact to substrate. Beta-D-fructose 1,6-bisphosphate-binding residues include Lys-156 and His-171. Residue His-178 is the Proton acceptor of the active site. Tyr-224 carries the phosphotyrosine modification. Thr-233 is a binding site for substrate.

It belongs to the LDH/MDH superfamily. LDH family. In terms of assembly, homotetramer.

The protein resides in the cytoplasm. The catalysed reaction is (S)-lactate + NAD(+) = pyruvate + NADH + H(+). It functions in the pathway fermentation; pyruvate fermentation to lactate; (S)-lactate from pyruvate: step 1/1. With respect to regulation, allosterically activated by fructose 1,6-bisphosphate (FBP). Functionally, catalyzes the conversion of lactate to pyruvate. The sequence is that of L-lactate dehydrogenase from Clostridium perfringens (strain ATCC 13124 / DSM 756 / JCM 1290 / NCIMB 6125 / NCTC 8237 / Type A).